Here is a 48-residue protein sequence, read N- to C-terminus: Sperm protamine P1 (48 aa).

Belongs to the protamine P1 family. In terms of tissue distribution, testis.

It localises to the nucleus. The protein localises to the chromosome. Its function is as follows. Protamines substitute for histones in the chromatin of sperm during the haploid phase of spermatogenesis. They compact sperm DNA into a highly condensed, stable and inactive complex. The protein is Sperm protamine P1 (PRM1) of Eptesicus fuscus (Big brown bat).